We begin with the raw amino-acid sequence, 473 residues long: MMTQVPDTPQALYRALPSMDSLLADAVLAPLLQRYGKAAVKAALDSQLRTARELIAQERRLPAWCANPSLLNGYLVDQLSKDYSHSLKPVWNLTGTILHTNLGRAQQSEAAIRAVTSVMRYPTPLEFELAAGERGHRDNAISGLIQRLTGAEACCVVNNNAAAVLLMLSAVAAGKEVIVSRGELVEIGGAFRIPDIMRQAGCTLVEVGSTNRTHLKDYEQAITENTAAIMKVHTSNYHISGFTAAVEEARLGQLCRERGILLISDLGSGSLTDLRRFGLKQEPTPQAMLADGVDLVSFSGDKLLGGPQSGLIVGKQALINKLQSHPLKRALRCDKLILAALEATLIHYLNPETLDKELPIMAKFARSQAELRQIGERLQQALAPLFTPSYGLELVECQTQVGSGSQPDTFLPSIGLCFNAQEGGSLTLLEQHFKQAQRPVIGRMTQDQLRLDLRGIDDEAELLAELSTLGVQL.

K302 is modified (N6-(pyridoxal phosphate)lysine).

This sequence belongs to the SelA family. Pyridoxal 5'-phosphate serves as cofactor.

It localises to the cytoplasm. The catalysed reaction is L-seryl-tRNA(Sec) + selenophosphate + H(+) = L-selenocysteinyl-tRNA(Sec) + phosphate. It functions in the pathway aminoacyl-tRNA biosynthesis; selenocysteinyl-tRNA(Sec) biosynthesis; selenocysteinyl-tRNA(Sec) from L-seryl-tRNA(Sec) (bacterial route): step 1/1. Functionally, converts seryl-tRNA(Sec) to selenocysteinyl-tRNA(Sec) required for selenoprotein biosynthesis. The sequence is that of L-seryl-tRNA(Sec) selenium transferase from Shewanella oneidensis (strain ATCC 700550 / JCM 31522 / CIP 106686 / LMG 19005 / NCIMB 14063 / MR-1).